A 121-amino-acid polypeptide reads, in one-letter code: Small ribosomal subunit protein uS13 (121 aa).

The interval 91–121 (HRKGLPMRGQRTRTNARTRKGPRKAGVALKK) is disordered.

This sequence belongs to the universal ribosomal protein uS13 family. In terms of assembly, part of the 30S ribosomal subunit. Forms a loose heterodimer with protein S19. Forms two bridges to the 50S subunit in the 70S ribosome.

Functionally, located at the top of the head of the 30S subunit, it contacts several helices of the 16S rRNA. In the 70S ribosome it contacts the 23S rRNA (bridge B1a) and protein L5 of the 50S subunit (bridge B1b), connecting the 2 subunits; these bridges are implicated in subunit movement. Contacts the tRNAs in the A and P-sites. This is Small ribosomal subunit protein uS13 from Cupriavidus taiwanensis (strain DSM 17343 / BCRC 17206 / CCUG 44338 / CIP 107171 / LMG 19424 / R1) (Ralstonia taiwanensis (strain LMG 19424)).